Reading from the N-terminus, the 451-residue chain is Sensor histidine kinase CssS (451 aa).

The Cytoplasmic segment spans residues 1 to 9 (MKNKPLAFQ). Residues 10-30 (IWVVISGILLAISILLLVLFS) form a helical membrane-spanning segment. The Extracellular segment spans residues 31 to 165 (NTLRDFFTNE…RDDLAYTLFK (135 aa)). Residues 166 to 186 (QLLFIIAVVILLSWIPAIWLA) traverse the membrane as a helical segment. The HAMP domain maps to 187–239 (KYLSRPLVSFEKHVKRISEQDWDDPVKVDRKDEIGKLGHTIEEMRQKLVQKDE). Topologically, residues 187–451 (KYLSRPLVSF…GVTYRIAVPK (265 aa)) are cytoplasmic. A Histidine kinase domain is found at 247–451 (NISHDLKTPV…GVTYRIAVPK (205 aa)). His-250 carries the post-translational modification Phosphohistidine; by autocatalysis.

It is found in the cell membrane. The catalysed reaction is ATP + protein L-histidine = ADP + protein N-phospho-L-histidine.. Its function is as follows. Member of the two-component regulatory system CssS/CssR required to control the cellular response to secretion stress. Required for the transcription of htrA. Could detect misfolded proteins at the membrane-cell wall interface and then activate CssR by phosphorylation. The sequence is that of Sensor histidine kinase CssS (cssS) from Bacillus subtilis (strain 168).